Reading from the N-terminus, the 78-residue chain is RNA-binding protein Hfq (78 aa).

Residues 10–69 (DPFLNALRKEHVPVSIYLVNGIKLQGHIESFDQYVVLLRNTVTQMVYKHAISTVVPARAV) enclose the Sm domain.

The protein belongs to the Hfq family. In terms of assembly, homohexamer.

RNA chaperone that binds small regulatory RNA (sRNAs) and mRNAs to facilitate mRNA translational regulation in response to envelope stress, environmental stress and changes in metabolite concentrations. Also binds with high specificity to tRNAs. This chain is RNA-binding protein Hfq, found in Janthinobacterium sp. (strain Marseille) (Minibacterium massiliensis).